Here is a 182-residue protein sequence, read N- to C-terminus: ATP synthase subunit b, chloroplastic (182 aa).

The chain crosses the membrane as a helical span at residues 36–56 (ILLLLLGLMYVLKEFLGSILV).

Belongs to the ATPase B chain family. F-type ATPases have 2 components, F(1) - the catalytic core - and F(0) - the membrane proton channel. F(1) has five subunits: alpha(3), beta(3), gamma(1), delta(1), epsilon(1). F(0) has four main subunits: a(1), b(1), b'(1) and c(10-14). The alpha and beta chains form an alternating ring which encloses part of the gamma chain. F(1) is attached to F(0) by a central stalk formed by the gamma and epsilon chains, while a peripheral stalk is formed by the delta, b and b' chains.

It localises to the plastid. The protein localises to the chloroplast thylakoid membrane. In terms of biological role, f(1)F(0) ATP synthase produces ATP from ADP in the presence of a proton or sodium gradient. F-type ATPases consist of two structural domains, F(1) containing the extramembraneous catalytic core and F(0) containing the membrane proton channel, linked together by a central stalk and a peripheral stalk. During catalysis, ATP synthesis in the catalytic domain of F(1) is coupled via a rotary mechanism of the central stalk subunits to proton translocation. Its function is as follows. Component of the F(0) channel, it forms part of the peripheral stalk, linking F(1) to F(0). In Gracilaria tenuistipitata var. liui (Red alga), this protein is ATP synthase subunit b, chloroplastic.